Here is a 293-residue protein sequence, read N- to C-terminus: Small ribosomal subunit biogenesis GTPase RsgA (293 aa).

In terms of domain architecture, CP-type G spans 63–223 (KNELVRPPIA…VADTPGFSSL (161 aa)). GTP contacts are provided by residues 112-115 (SKMD) and 166-174 (GQSGVGKSS). Positions 247, 252, 254, and 260 each coordinate Zn(2+).

Belongs to the TRAFAC class YlqF/YawG GTPase family. RsgA subfamily. In terms of assembly, monomer. Associates with 30S ribosomal subunit, binds 16S rRNA. It depends on Zn(2+) as a cofactor.

It localises to the cytoplasm. In terms of biological role, one of several proteins that assist in the late maturation steps of the functional core of the 30S ribosomal subunit. Helps release RbfA from mature subunits. May play a role in the assembly of ribosomal proteins into the subunit. Circularly permuted GTPase that catalyzes slow GTP hydrolysis, GTPase activity is stimulated by the 30S ribosomal subunit. In Bacillus cytotoxicus (strain DSM 22905 / CIP 110041 / 391-98 / NVH 391-98), this protein is Small ribosomal subunit biogenesis GTPase RsgA.